Reading from the N-terminus, the 527-residue chain is Heat shock factor protein HSF8 (527 aa).

The DNA-binding element occupies 39–133 (PFLVKTYDMV…KSISRRKPAH (95 aa)). Disordered stretches follow at residues 128–158 (RRKP…HSAS), 241–273 (NESN…ADGQ), and 297–341 (SSPR…TSGK). Positions 134 to 152 (GHAQQQQQPHGNAQQQMQP) are enriched in low complexity. The segment covering 317-326 (SPQSNASSGR) has biased composition (polar residues).

It belongs to the HSF family. Homotrimer. Post-translationally, exhibits temperature-dependent phosphorylation.

The protein resides in the nucleus. DNA-binding protein that specifically binds heat shock promoter elements (HSE) and activates transcription. In Solanum lycopersicum (Tomato), this protein is Heat shock factor protein HSF8 (HSF8).